The sequence spans 296 residues: Probable endonuclease 4 (296 aa).

Positions 68, 109, 144, 178, 181, 213, 226, 228, and 258 each coordinate Zn(2+).

This sequence belongs to the AP endonuclease 2 family. Zn(2+) is required as a cofactor.

It carries out the reaction Endonucleolytic cleavage to 5'-phosphooligonucleotide end-products.. Its function is as follows. Endonuclease IV plays a role in DNA repair. It cleaves phosphodiester bonds at apurinic or apyrimidinic (AP) sites, generating a 3'-hydroxyl group and a 5'-terminal sugar phosphate. This chain is Probable endonuclease 4, found in Staphylococcus aureus (strain NCTC 8325 / PS 47).